Consider the following 450-residue polypeptide: Tubulin beta-3 chain (450 aa).

The short motif at Met1–Ile4 is the MREI motif element. GTP contacts are provided by Gln11, Glu69, Ser138, Gly142, Thr143, and Gly144. Glu69 lines the Mg(2+) pocket. Residue Ser172 is modified to Phosphoserine; by CDK1. GTP is bound by residues Asn204 and Asn226. The segment at Tyr422–Lys450 is disordered. Over residues Thr429–Lys450 the composition is skewed to acidic residues. 5-glutamyl polyglutamate is present on Glu438. A Phosphoserine modification is found at Ser444.

Belongs to the tubulin family. In terms of assembly, heterodimer of alpha- and beta-tubulin. A typical microtubule is a hollow water-filled tube with an outer diameter of 25 nm and an inner diameter of 15 nM. Alpha-beta heterodimers associate head-to-tail to form protofilaments running lengthwise along the microtubule wall with the beta-tubulin subunit facing the microtubule plus end conferring a structural polarity. Microtubules usually have 13 protofilaments but different protofilament numbers can be found in some organisms and specialized cells. Interacts with gamma-tubulin; the interaction allows microtubules to nucleate from the gamma-tubulin ring complex (gTuRC). Interacts with UNC5C (via cytoplasmic domain); this interaction is decreased by NTN1/Netrin-1. Interacts with NLRP5/MATER at cytoskeleton microtubules. Interacts with DPYSL5. Interacts with CFAP61. The cofactor is Mg(2+). In terms of processing, some glutamate residues at the C-terminus are polyglycylated, resulting in polyglycine chains on the gamma-carboxyl group. Glycylation is mainly limited to tubulin incorporated into axonemes (cilia and flagella) whereas glutamylation is prevalent in neuronal cells, centrioles, axonemes, and the mitotic spindle. Both modifications can coexist on the same protein on adjacent residues, and lowering polyglycylation levels increases polyglutamylation, and reciprocally. Cilia and flagella glycylation is required for their stability and maintenance. Flagella glycylation controls sperm motility. Post-translationally, some glutamate residues at the C-terminus are polyglutamylated, resulting in polyglutamate chains on the gamma-carboxyl group. Polyglutamylation plays a key role in microtubule severing by spastin (SPAST). SPAST preferentially recognizes and acts on microtubules decorated with short polyglutamate tails: severing activity by SPAST increases as the number of glutamates per tubulin rises from one to eight, but decreases beyond this glutamylation threshold. Glutamylation is also involved in cilia motility. Phosphorylated on Ser-172 by CDK1 during the cell cycle, from metaphase to telophase, but not in interphase. This phosphorylation inhibits tubulin incorporation into microtubules.

The protein resides in the cytoplasm. Its subcellular location is the cytoskeleton. It localises to the cell projection. The protein localises to the growth cone. It is found in the lamellipodium. The protein resides in the filopodium. Its function is as follows. Tubulin is the major constituent of microtubules, protein filaments consisting of alpha- and beta-tubulin heterodimers. Microtubules grow by the addition of GTP-tubulin dimers to the microtubule end, where a stabilizing cap forms. Below the cap, alpha-beta tubulin heterodimers are in GDP-bound state, owing to GTPase activity of alpha-tubulin. TUBB3 plays a critical role in proper axon guidance and maintenance. Binding of NTN1/Netrin-1 to its receptor UNC5C might cause dissociation of UNC5C from polymerized TUBB3 in microtubules and thereby lead to increased microtubule dynamics and axon repulsion. Plays a role in dorsal root ganglion axon projection towards the spinal cord. This Rattus norvegicus (Rat) protein is Tubulin beta-3 chain (Tubb3).